Consider the following 274-residue polypeptide: Dehydration-responsive element-binding protein 2A (274 aa).

Composition is skewed to basic and acidic residues over residues 1 to 10 (MERGEGRRGD) and 35 to 50 (KWWK…ENSS). A disordered region spans residues 1–75 (MERGEGRRGD…KGGPENSNCA (75 aa)). Positions 75–132 (AYRGVRQRTWGKWVAEIREPNRGRRLWLGSFPTALEAAHAYDEAARAMYGPTARVNFA) form a DNA-binding region, AP2/ERF.

This sequence belongs to the AP2/ERF transcription factor family. ERF subfamily.

The protein resides in the nucleus. Transcriptional activator that binds specifically to the DNA sequence 5'-[AG]CCGAC-3' of the cis-acting dehydration-responsive element (DRE). Binding to the C-repeat/DRE element mediates high salinity- and dehydration-inducible transcription. This Oryza sativa subsp. japonica (Rice) protein is Dehydration-responsive element-binding protein 2A (DREB2A).